The chain runs to 64 residues: DNA gyrase inhibitor YacG (64 aa).

Zn(2+) contacts are provided by Cys-9, Cys-12, Cys-28, and Cys-32. The segment at 45–64 is disordered; it reads NAIAGAPDMSDSDGWSEDQY. A compositionally biased stretch (acidic residues) spans 54-64; that stretch reads SDSDGWSEDQY.

This sequence belongs to the DNA gyrase inhibitor YacG family. In terms of assembly, interacts with GyrB. Zn(2+) serves as cofactor.

Functionally, inhibits all the catalytic activities of DNA gyrase by preventing its interaction with DNA. Acts by binding directly to the C-terminal domain of GyrB, which probably disrupts DNA binding by the gyrase. The sequence is that of DNA gyrase inhibitor YacG from Vibrio parahaemolyticus serotype O3:K6 (strain RIMD 2210633).